A 286-amino-acid polypeptide reads, in one-letter code: Pyridoxal kinase PdxY (286 aa).

Residue Ser-8 coordinates substrate. Residues Asp-110 and Glu-147 each contribute to the ATP site. Asp-223 is a substrate binding site.

The protein belongs to the pyridoxine kinase family. PdxY subfamily. As to quaternary structure, homodimer. Requires Mg(2+) as cofactor.

It catalyses the reaction pyridoxal + ATP = pyridoxal 5'-phosphate + ADP + H(+). It functions in the pathway cofactor metabolism; pyridoxal 5'-phosphate salvage; pyridoxal 5'-phosphate from pyridoxal: step 1/1. Functionally, pyridoxal kinase involved in the salvage pathway of pyridoxal 5'-phosphate (PLP). Catalyzes the phosphorylation of pyridoxal to PLP. The protein is Pyridoxal kinase PdxY of Granulibacter bethesdensis (strain ATCC BAA-1260 / CGDNIH1).